The chain runs to 815 residues: Leucine--tRNA ligase (815 aa).

A 'HIGH' region motif is present at residues 42–52 (PYPSGRLHMGH). The 'KMSKS' region motif lies at 574–578 (KMSKS). Lysine 577 is an ATP binding site.

It belongs to the class-I aminoacyl-tRNA synthetase family.

The protein resides in the cytoplasm. It catalyses the reaction tRNA(Leu) + L-leucine + ATP = L-leucyl-tRNA(Leu) + AMP + diphosphate. This is Leucine--tRNA ligase from Alcanivorax borkumensis (strain ATCC 700651 / DSM 11573 / NCIMB 13689 / SK2).